Here is a 426-residue protein sequence, read N- to C-terminus: UDP-N-acetylglucosamine 1-carboxyvinyltransferase (426 aa).

Phosphoenolpyruvate is bound at residue 22–23 (KN). Position 93 (Arg-93) interacts with UDP-N-acetyl-alpha-D-glucosamine. The active-site Proton donor is the Cys-117. A 2-(S-cysteinyl)pyruvic acid O-phosphothioketal modification is found at Cys-117. UDP-N-acetyl-alpha-D-glucosamine is bound by residues 162 to 165 (KVSV), Asp-307, and Ile-329.

This sequence belongs to the EPSP synthase family. MurA subfamily.

The protein resides in the cytoplasm. It catalyses the reaction phosphoenolpyruvate + UDP-N-acetyl-alpha-D-glucosamine = UDP-N-acetyl-3-O-(1-carboxyvinyl)-alpha-D-glucosamine + phosphate. It functions in the pathway cell wall biogenesis; peptidoglycan biosynthesis. Cell wall formation. Adds enolpyruvyl to UDP-N-acetylglucosamine. This is UDP-N-acetylglucosamine 1-carboxyvinyltransferase from Haemophilus ducreyi (strain 35000HP / ATCC 700724).